A 482-amino-acid polypeptide reads, in one-letter code: tRNA sulfurtransferase (482 aa).

One can recognise a THUMP domain in the interval 61–165; the sequence is LAIRDALTRI…DDRLLLIKGR (105 aa). ATP-binding positions include 183 to 184, lysine 265, glycine 287, and glutamine 296; that span reads LI. Cysteine 344 and cysteine 456 are oxidised to a cystine. The 79-residue stretch at 404–482 folds into the Rhodanese domain; the sequence is FGANDVILDI…GFANVKVYRP (79 aa). Cysteine 456 acts as the Cysteine persulfide intermediate in catalysis.

This sequence belongs to the ThiI family.

It is found in the cytoplasm. It carries out the reaction [ThiI sulfur-carrier protein]-S-sulfanyl-L-cysteine + a uridine in tRNA + 2 reduced [2Fe-2S]-[ferredoxin] + ATP + H(+) = [ThiI sulfur-carrier protein]-L-cysteine + a 4-thiouridine in tRNA + 2 oxidized [2Fe-2S]-[ferredoxin] + AMP + diphosphate. The catalysed reaction is [ThiS sulfur-carrier protein]-C-terminal Gly-Gly-AMP + S-sulfanyl-L-cysteinyl-[cysteine desulfurase] + AH2 = [ThiS sulfur-carrier protein]-C-terminal-Gly-aminoethanethioate + L-cysteinyl-[cysteine desulfurase] + A + AMP + 2 H(+). It participates in cofactor biosynthesis; thiamine diphosphate biosynthesis. Functionally, catalyzes the ATP-dependent transfer of a sulfur to tRNA to produce 4-thiouridine in position 8 of tRNAs, which functions as a near-UV photosensor. Also catalyzes the transfer of sulfur to the sulfur carrier protein ThiS, forming ThiS-thiocarboxylate. This is a step in the synthesis of thiazole, in the thiamine biosynthesis pathway. The sulfur is donated as persulfide by IscS. The protein is tRNA sulfurtransferase of Salmonella paratyphi B (strain ATCC BAA-1250 / SPB7).